Reading from the N-terminus, the 461-residue chain is Bifunctional protein GlmU (461 aa).

A pyrophosphorylase region spans residues 1–232 (MNLQIIILAA…SFEVQGINNR (232 aa)). UDP-N-acetyl-alpha-D-glucosamine contacts are provided by residues 8-11 (LAAG), Lys22, Gln73, and 78-79 (GT). Residue Asp102 coordinates Mg(2+). Positions 142, 157, and 230 each coordinate UDP-N-acetyl-alpha-D-glucosamine. Asn230 contacts Mg(2+). A linker region spans residues 233–253 (QQLQQLERIWQQRAANQLMEK). The interval 254-461 (GATLADANRF…WKRPVKRERD (208 aa)) is N-acetyltransferase. UDP-N-acetyl-alpha-D-glucosamine is bound by residues Arg336 and Lys354. The Proton acceptor role is filled by His366. Positions 369 and 380 each coordinate UDP-N-acetyl-alpha-D-glucosamine. Acetyl-CoA contacts are provided by residues Ala383, 389–390 (NY), Ser408, and Ala426.

It in the N-terminal section; belongs to the N-acetylglucosamine-1-phosphate uridyltransferase family. The protein in the C-terminal section; belongs to the transferase hexapeptide repeat family. As to quaternary structure, homotrimer. The cofactor is Mg(2+).

It localises to the cytoplasm. The catalysed reaction is alpha-D-glucosamine 1-phosphate + acetyl-CoA = N-acetyl-alpha-D-glucosamine 1-phosphate + CoA + H(+). The enzyme catalyses N-acetyl-alpha-D-glucosamine 1-phosphate + UTP + H(+) = UDP-N-acetyl-alpha-D-glucosamine + diphosphate. Its pathway is nucleotide-sugar biosynthesis; UDP-N-acetyl-alpha-D-glucosamine biosynthesis; N-acetyl-alpha-D-glucosamine 1-phosphate from alpha-D-glucosamine 6-phosphate (route II): step 2/2. It functions in the pathway nucleotide-sugar biosynthesis; UDP-N-acetyl-alpha-D-glucosamine biosynthesis; UDP-N-acetyl-alpha-D-glucosamine from N-acetyl-alpha-D-glucosamine 1-phosphate: step 1/1. It participates in bacterial outer membrane biogenesis; LPS lipid A biosynthesis. In terms of biological role, catalyzes the last two sequential reactions in the de novo biosynthetic pathway for UDP-N-acetylglucosamine (UDP-GlcNAc). The C-terminal domain catalyzes the transfer of acetyl group from acetyl coenzyme A to glucosamine-1-phosphate (GlcN-1-P) to produce N-acetylglucosamine-1-phosphate (GlcNAc-1-P), which is converted into UDP-GlcNAc by the transfer of uridine 5-monophosphate (from uridine 5-triphosphate), a reaction catalyzed by the N-terminal domain. In Legionella pneumophila (strain Corby), this protein is Bifunctional protein GlmU.